The chain runs to 508 residues: Probable monogalactosyldiacylglycerol synthase 3, chloroplastic (508 aa).

Residues 1-60 constitute a chloroplast transit peptide; it reads MAASSSSSSSMASPRGRSIRETVLETVAAYHQQQRMRRKFRKSLSYAGELSSAGRARGEG. The disordered stretch occupies residues 51–79; it reads SSAGRARGEGGASSSASTTSLCGPDEDDE.

This sequence belongs to the glycosyltransferase 28 family.

The protein resides in the plastid. The protein localises to the chloroplast membrane. The enzyme catalyses a 1,2-diacyl-sn-glycerol + UDP-alpha-D-galactose = a 1,2-diacyl-3-O-(beta-D-galactosyl)-sn-glycerol + UDP + H(+). Functionally, involved in the synthesis of the major structural component of photosynthetic membranes. In Oryza sativa subsp. japonica (Rice), this protein is Probable monogalactosyldiacylglycerol synthase 3, chloroplastic (MGD3).